A 210-amino-acid polypeptide reads, in one-letter code: Probable septum site-determining protein MinC (210 aa).

This sequence belongs to the MinC family. In terms of assembly, interacts with MinD and FtsZ.

In terms of biological role, cell division inhibitor that blocks the formation of polar Z ring septums. Rapidly oscillates between the poles of the cell to destabilize FtsZ filaments that have formed before they mature into polar Z rings. Prevents FtsZ polymerization. This is Probable septum site-determining protein MinC from Thermotoga sp. (strain RQ2).